Reading from the N-terminus, the 703-residue chain is Prolyl 3-hydroxylase 2 (703 aa).

The first 21 residues, M1–G21, serve as a signal peptide directing secretion. The tract at residues P18 to Q40 is disordered. 4 TPR repeats span residues F42–L75, R144–H177, H205–E238, and P301–D334. Residues N444, N455, and N544 are each glycosylated (N-linked (GlcNAc...) asparagine). A Fe2OG dioxygenase domain is found at T552–L666. The Fe cation site is built by H575, D577, and H647. The active site involves R657. Positions K700–L703 match the Prevents secretion from ER motif.

The protein belongs to the leprecan family. Fe cation serves as cofactor. The cofactor is L-ascorbate. Detected at low levels in cartilage.

The protein localises to the endoplasmic reticulum. It is found in the sarcoplasmic reticulum. Its subcellular location is the golgi apparatus. It carries out the reaction L-prolyl-[collagen] + 2-oxoglutarate + O2 = trans-3-hydroxy-L-prolyl-[collagen] + succinate + CO2. Its function is as follows. Prolyl 3-hydroxylase that catalyzes the post-translational formation of 3-hydroxyproline on collagens. Contributes to proline 3-hydroxylation of collagen COL4A1 and COL1A1 in tendons, the eye sclera and in the eye lens capsule. Has high activity with the type IV collagen COL4A1, and lower activity with COL1A1. Catalyzes hydroxylation of the first Pro in Gly-Pro-Hyp sequences where Hyp is 4-hydroxyproline. Has no activity on substrates that lack 4-hydroxyproline in the third position. This chain is Prolyl 3-hydroxylase 2, found in Rattus norvegicus (Rat).